The primary structure comprises 137 residues: Peptide methionine sulfoxide reductase MsrB (137 aa).

One can recognise a MsrB domain in the interval 7–129 (PGELKNGLSE…NSASLSFTDE (123 aa)). 4 residues coordinate Zn(2+): cysteine 46, cysteine 49, cysteine 95, and cysteine 98. The active-site Nucleophile is cysteine 118.

It belongs to the MsrB Met sulfoxide reductase family. Requires Zn(2+) as cofactor.

It catalyses the reaction L-methionyl-[protein] + [thioredoxin]-disulfide + H2O = L-methionyl-(R)-S-oxide-[protein] + [thioredoxin]-dithiol. This is Peptide methionine sulfoxide reductase MsrB from Klebsiella pneumoniae (strain 342).